The primary structure comprises 356 residues: Carminomycin 4-O-methyltransferase DauK (356 aa).

Position 153 (Arg153) interacts with S-adenosyl-L-methionine. Asp163 is a substrate binding site. Residues Gly187, Glu210, 237-238, and Ser252 each bind S-adenosyl-L-methionine; that span reads DF. Residues Asn257 and Arg303 each coordinate substrate.

This sequence belongs to the class I-like SAM-binding methyltransferase superfamily. Cation-independent O-methyltransferase family. In terms of assembly, homodimer and homotetramer in equilibrium.

It carries out the reaction carminomycin + S-adenosyl-L-methionine = daunorubicin + S-adenosyl-L-homocysteine + H(+). The protein operates within antibiotic biosynthesis; daunorubicin biosynthesis. It participates in antibiotic biosynthesis; carminomycin biosynthesis. Strongly inhibited by S-adenosyl-L-homocysteine and weakly by adenine and methionine. Its function is as follows. Involved in the biosynthesis of the anthracyclines carminomycin and daunorubicin (daunomycin) which are aromatic polyketide antibiotics that exhibit high cytotoxicity and are widely applied in the chemotherapy of a variety of cancers. In vivo, catalyzes the transfer of a methyl group from S-adenosyl-L-methionine to the 4-O-position of carminomycin to form daunorubicin. In vitro, it also methylates the anthracyclines rhodomycin D (10-carbomethoxy-13-deoxycarminomycin), 10-carboxy-13-deoxycarminomycin, 13-deoxy-carminomycin and 13-dihydrocarminomycin at the 4-hydroxyl position. This chain is Carminomycin 4-O-methyltransferase DauK (dauK), found in Streptomyces sp. (strain C5).